The chain runs to 210 residues: FMN-dependent NADH:quinone oxidoreductase (210 aa).

FMN is bound by residues Ser9 and 15–17 (SHS).

It belongs to the azoreductase type 1 family. Homodimer. FMN serves as cofactor.

It catalyses the reaction 2 a quinone + NADH + H(+) = 2 a 1,4-benzosemiquinone + NAD(+). The enzyme catalyses N,N-dimethyl-1,4-phenylenediamine + anthranilate + 2 NAD(+) = 2-(4-dimethylaminophenyl)diazenylbenzoate + 2 NADH + 2 H(+). In terms of biological role, quinone reductase that provides resistance to thiol-specific stress caused by electrophilic quinones. Its function is as follows. Also exhibits azoreductase activity. Catalyzes the reductive cleavage of the azo bond in aromatic azo compounds to the corresponding amines. The chain is FMN-dependent NADH:quinone oxidoreductase from Mesorhizobium japonicum (strain LMG 29417 / CECT 9101 / MAFF 303099) (Mesorhizobium loti (strain MAFF 303099)).